Here is a 426-residue protein sequence, read N- to C-terminus: UDP-N-acetylglucosamine 1-carboxyvinyltransferase (426 aa).

Lys-23 to Asn-24 contributes to the phosphoenolpyruvate binding site. A UDP-N-acetyl-alpha-D-glucosamine-binding site is contributed by Arg-99. The Proton donor role is filled by Asp-123. UDP-N-acetyl-alpha-D-glucosamine contacts are provided by Asp-311 and Ile-333.

The protein belongs to the EPSP synthase family. MurA subfamily.

It localises to the cytoplasm. It catalyses the reaction phosphoenolpyruvate + UDP-N-acetyl-alpha-D-glucosamine = UDP-N-acetyl-3-O-(1-carboxyvinyl)-alpha-D-glucosamine + phosphate. It functions in the pathway cell wall biogenesis; peptidoglycan biosynthesis. Functionally, cell wall formation. Adds enolpyruvyl to UDP-N-acetylglucosamine. This is UDP-N-acetylglucosamine 1-carboxyvinyltransferase from Nocardia farcinica (strain IFM 10152).